The sequence spans 275 residues: Large ribosomal subunit protein uL2 (275 aa).

Disordered stretches follow at residues 34-59 (LEKK…GGHK) and 223-275 (VAMN…RNKK).

The protein belongs to the universal ribosomal protein uL2 family. As to quaternary structure, part of the 50S ribosomal subunit. Forms a bridge to the 30S subunit in the 70S ribosome.

Functionally, one of the primary rRNA binding proteins. Required for association of the 30S and 50S subunits to form the 70S ribosome, for tRNA binding and peptide bond formation. It has been suggested to have peptidyltransferase activity; this is somewhat controversial. Makes several contacts with the 16S rRNA in the 70S ribosome. The protein is Large ribosomal subunit protein uL2 of Teredinibacter turnerae (strain ATCC 39867 / T7901).